We begin with the raw amino-acid sequence, 217 residues long: MEHSTWHRLLKEELPNHYFSKINQFMDKVYEEGTIYPPRDKVFNALLETPFEEVRVVILGQDPYHGPNQAQGLSFSVPETIPAPPSLVNILKELGEDLGPRSHHDLTTWAEQGVLLLNACLTVPAGRANGHAGQIWEPFTDAVIKVLNQKDTPVVFILWGGYARKKKSLVTNPKHAIIESAHPSPLSAYRGFFGSKPFSKANAYLVSQGQPPIDWLK.

The active-site Proton acceptor is aspartate 62.

It belongs to the uracil-DNA glycosylase (UDG) superfamily. UNG family.

It localises to the cytoplasm. The enzyme catalyses Hydrolyzes single-stranded DNA or mismatched double-stranded DNA and polynucleotides, releasing free uracil.. In terms of biological role, excises uracil residues from the DNA which can arise as a result of misincorporation of dUMP residues by DNA polymerase or due to deamination of cytosine. This Streptococcus thermophilus (strain ATCC BAA-491 / LMD-9) protein is Uracil-DNA glycosylase.